Consider the following 195-residue polypeptide: Pyruvoyl-dependent arginine decarboxylase AaxB (195 aa).

The residue at position 53 (serine 53) is a Pyruvic acid (Ser).

The protein belongs to the pyruvoyl-dependent arginine decarboxylase family. As to quaternary structure, trimer of an alpha-beta dimer. Requires pyruvate as cofactor.

The protein localises to the cytoplasm. The catalysed reaction is L-arginine + H(+) = agmatine + CO2. Functionally, part of the AaxABC system, catalyzes the decarboxylation of L-arginine. The arginine uptake by the bacterium in the macrophage may be a virulence factor against the host innate immune response. This Chlamydia muridarum (strain MoPn / Nigg) protein is Pyruvoyl-dependent arginine decarboxylase AaxB (aaxB).